The primary structure comprises 296 residues: Acetylglutamate kinase (296 aa).

Residues 68–69 (GG), arginine 90, and asparagine 195 each bind substrate.

The protein belongs to the acetylglutamate kinase family. ArgB subfamily.

It is found in the cytoplasm. It catalyses the reaction N-acetyl-L-glutamate + ATP = N-acetyl-L-glutamyl 5-phosphate + ADP. The protein operates within amino-acid biosynthesis; L-arginine biosynthesis; N(2)-acetyl-L-ornithine from L-glutamate: step 2/4. In terms of biological role, catalyzes the ATP-dependent phosphorylation of N-acetyl-L-glutamate. This Desulfotalea psychrophila (strain LSv54 / DSM 12343) protein is Acetylglutamate kinase.